An 879-amino-acid chain; its full sequence is Autophagy-related protein 9 (879 aa).

The segment at 1–56 (MGKGEGYLDPTILSVASGSRNSGKGKERTRRKGGHKYHSLHVQDEEEEEPPESDAL) is disordered. The span at 27-39 (ERTRRKGGHKYHS) shows a compositional bias: basic residues. Residues 104–124 (VLNLLTTFFVIAFSTFLISCI) traverse the membrane as a helical segment. N-linked (GlcNAc...) asparagine glycosylation is found at Asn163 and Asn166. A helical membrane pass occupies residues 180 to 200 (LFLIILSAFFIFQVASFAMSV). The stretch at 385–405 (FIFMGILNAIFAPFIILYLLI) is an intramembrane region. A run of 2 helical transmembrane segments spans residues 455–475 (FVAF…LIDP) and 488–508 (TVLF…GMVP). The stretch at 555–575 (IMIFFSELLSVILTPFILFFS) is an intramembrane region. 2 disordered regions span residues 620-666 (ETGL…DWRG) and 763-825 (WAKS…EEER). A compositionally biased stretch (low complexity) spans 632 to 657 (GPAADGFAAGKPSRPTTRRTTSSSPS). Basic and acidic residues predominate over residues 798–817 (EGDKGDDSIDGWSKRVKTDG).

It belongs to the ATG9 family. Homotrimer; forms a homotrimer with a central pore that forms a path between the two membrane leaflets. In terms of processing, phosphorylated by ATG1. ATG1 phosphorylation is required for preautophagosome elongation.

It is found in the preautophagosomal structure membrane. The protein resides in the cytoplasmic vesicle membrane. The protein localises to the golgi apparatus membrane. It localises to the endoplasmic reticulum membrane. The catalysed reaction is a 1,2-diacyl-sn-glycero-3-phosphocholine(in) = a 1,2-diacyl-sn-glycero-3-phosphocholine(out). It carries out the reaction a 1,2-diacyl-sn-glycero-3-phospho-L-serine(in) = a 1,2-diacyl-sn-glycero-3-phospho-L-serine(out). It catalyses the reaction a 1,2-diacyl-sn-glycero-3-phosphoethanolamine(in) = a 1,2-diacyl-sn-glycero-3-phosphoethanolamine(out). The enzyme catalyses a 1,2-diacyl-sn-glycero-3-phospho-(1D-myo-inositol-3-phosphate)(in) = a 1,2-diacyl-sn-glycero-3-phospho-(1D-myo-inositol-3-phosphate)(out). Phospholipid scramblase involved in autophagy and cytoplasm to vacuole transport (Cvt) vesicle formation. Cycles between the preautophagosomal structure/phagophore assembly site (PAS) and the cytoplasmic vesicle pool and supplies membrane for the growing autophagosome. Lipid scramblase activity plays a key role in preautophagosomal structure/phagophore assembly by distributing the phospholipids that arrive through ATG2 from the cytoplasmic to the luminal leaflet of the bilayer, thereby driving autophagosomal membrane expansion. Required for mitophagy. Also involved in endoplasmic reticulum-specific autophagic process and is essential for the survival of cells subjected to severe ER stress. Different machineries are required for anterograde trafficking to the PAS during either the Cvt pathway or bulk autophagy and for retrograde trafficking. The polypeptide is Autophagy-related protein 9 (ATG9) (Cryptococcus neoformans var. neoformans serotype D (strain B-3501A) (Filobasidiella neoformans)).